A 288-amino-acid polypeptide reads, in one-letter code: Killer cell lectin-like receptor 2 (288 aa).

Over 1 to 45 the chain is Cytoplasmic; that stretch reads MSEQEVTYTTLRFHKSSGLQNPVRPEETQRPRDVGHRECSVPWKF. A helical; Signal-anchor for type II membrane protein membrane pass occupies residues 46-66; it reads IVIVLGILCFLLLLTVAVLVI. At 67 to 288 the chain is on the extracellular side; that stretch reads HIFRDGQEKH…SALQRDEDES (222 aa). 3 N-linked (GlcNAc...) asparagine glycosylation sites follow: N94, N105, and N114. Residues 144–263 form the C-type lectin domain; the sequence is QVEGYWFCCG…THGCICEKRL (120 aa). Cystine bridges form between C151/C156, C169/C257, C173/C259, and C238/C251. N177 carries an N-linked (GlcNAc...) asparagine glycan.

Homodimer; disulfide-linked.

It is found in the membrane. Functionally, receptor on natural killer (NK) cells for class I MHC. The polypeptide is Killer cell lectin-like receptor 2 (Klra2) (Mus musculus (Mouse)).